The primary structure comprises 378 residues: Ret finger protein-like 2 (378 aa).

Residues 101-143 form an RING-type; degenerate zinc finger; that stretch reads CPVCSDYLEKPMSLECGCAVCLKCINSLQKEPHGEDLLCCCSS. Residues 168-362 enclose the B30.2/SPRY domain; it reads EPKLKKILQM…DQGVLSICPL (195 aa).

Seems to be expressed in prostate and less abundantly in adult brain, fetal liver, and fetal kidney.

This is Ret finger protein-like 2 (RFPL2) from Homo sapiens (Human).